Reading from the N-terminus, the 61-residue chain is Large ribosomal subunit protein uL30 (61 aa).

The protein belongs to the universal ribosomal protein uL30 family. As to quaternary structure, part of the 50S ribosomal subunit.

The protein is Large ribosomal subunit protein uL30 of Lactobacillus acidophilus (strain ATCC 700396 / NCK56 / N2 / NCFM).